A 210-amino-acid chain; its full sequence is Large ribosomal subunit protein uL3 (210 aa).

The tract at residues 139-165 is disordered; the sequence is AEKVHRSPGSIGHATFPGKVFKGKKMP.

This sequence belongs to the universal ribosomal protein uL3 family. Part of the 50S ribosomal subunit. Forms a cluster with proteins L14 and L19.

In terms of biological role, one of the primary rRNA binding proteins, it binds directly near the 3'-end of the 23S rRNA, where it nucleates assembly of the 50S subunit. This Maridesulfovibrio salexigens (strain ATCC 14822 / DSM 2638 / NCIMB 8403 / VKM B-1763) (Desulfovibrio salexigens) protein is Large ribosomal subunit protein uL3.